The sequence spans 293 residues: Bis(5'-nucleosyl)-tetraphosphatase, symmetrical (293 aa).

This sequence belongs to the Ap4A hydrolase family.

The enzyme catalyses P(1),P(4)-bis(5'-adenosyl) tetraphosphate + H2O = 2 ADP + 2 H(+). In terms of biological role, hydrolyzes diadenosine 5',5'''-P1,P4-tetraphosphate to yield ADP. The polypeptide is Bis(5'-nucleosyl)-tetraphosphatase, symmetrical (Pseudomonas fluorescens (strain Pf0-1)).